The sequence spans 827 residues: uncharacterized protein (827 aa).

Positions 12–82 (FDADFEAILN…DMDIGVLSTG (71 aa)) constitute a PAS 1 domain. In terms of domain architecture, PAC 1 spans 212–264 (LDVEFRLAAAEGGYSWYRSRAATRRAEDGSILRWYGTVEDIDDRRKMFEALKE). Residues 265 to 335 (SEARFRAIAD…RVFYQAFDLR (71 aa)) form the PAS 2 domain. The PAC 2 domain maps to 338-390 (VRMEYRLKRAGGGSAWVIDIGQPRFASDGTFLGFVGIALDITERRNAEQERLL). The region spanning 428–561 (TRLAILCLDL…GGGTIVQYEP (134 aa)) is the GGDEF domain. One can recognise an EAL domain in the interval 570–820 (RQRMKVSLRH…QAMALLKSRS (251 aa)).

This is an uncharacterized protein from Sinorhizobium fredii (strain NBRC 101917 / NGR234).